Consider the following 288-residue polypeptide: Nucleotide-binding protein Mlg_2233 (288 aa).

Position 11–18 (Gly-11–Ser-18) interacts with ATP. GTP is bound at residue Asp-63–Asn-66.

The protein belongs to the RapZ-like family.

Its function is as follows. Displays ATPase and GTPase activities. The polypeptide is Nucleotide-binding protein Mlg_2233 (Alkalilimnicola ehrlichii (strain ATCC BAA-1101 / DSM 17681 / MLHE-1)).